Reading from the N-terminus, the 226-residue chain is Glutathione peroxidase 3 (226 aa).

An N-terminal signal peptide occupies residues 1–24 (MARLFRASCLLSLLLAGFIPPSQG). The active site involves Sec73. A non-standard amino acid (selenocysteine) is located at residue Sec73.

It belongs to the glutathione peroxidase family. In terms of assembly, homotetramer. As to expression, secreted in plasma.

The protein resides in the secreted. The catalysed reaction is 2 glutathione + H2O2 = glutathione disulfide + 2 H2O. It carries out the reaction tert-butyl hydroperoxide + 2 glutathione = tert-butanol + glutathione disulfide + H2O. Functionally, protects cells and enzymes from oxidative damage, by catalyzing the reduction of hydrogen peroxide, lipid peroxides and organic hydroperoxide, by glutathione. This chain is Glutathione peroxidase 3, found in Bos taurus (Bovine).